Here is a 221-residue protein sequence, read N- to C-terminus: MVSSSVSSVTEVKVESYVFPPSVKPPSSTKSFLLGGAGVRGLEINGNFVKFTAIGVYLEESGVAVLSGKWKGKTAEELSDSVEFFTDIITGPFEKFTQVTLILPVTGQQYSPKVAENCAAQWKAAGIYTDADGIAIEKFLQVFQTESFTPGDSILFTHSPESLTISFGKNGAIPEVSNAVIENKKLSEAVIESIIGEKGVSPAAKKSLATRIAEILNHFDA.

Substrate is bound by residues Thr-52, Asn-117, and Ser-193.

This sequence belongs to the chalcone isomerase family. As to expression, flowers.

The enzyme catalyses a chalcone = a flavanone.. It participates in secondary metabolite biosynthesis; flavonoid biosynthesis. Functionally, catalyzes the intramolecular cyclization of bicyclic chalcones into tricyclic (S)-flavanones. Responsible for the isomerization of 4,2',4',6'-tetrahydroxychalcone (also termed chalcone) into naringenin. The sequence is that of Chalcone--flavanone isomerase (CHI) from Gentiana triflora (Clustered gentian).